A 32-amino-acid polypeptide reads, in one-letter code: Acyclotide phyb-M (32 aa).

The residue at position 1 (glutamine 1) is a Pyrrolidone carboxylic acid. 3 disulfides stabilise this stretch: cysteine 5/cysteine 21, cysteine 9/cysteine 23, and cysteine 14/cysteine 28.

In terms of processing, contains 3 disulfide bonds. As to expression, expressed in midvein, lamina and periphery of leaves (at protein level).

Probably participates in a plant defense mechanism. This chain is Acyclotide phyb-M, found in Petunia hybrida (Petunia).